A 137-amino-acid polypeptide reads, in one-letter code: Protein BNS1 (137 aa).

Its function is as follows. Component of the FEAR (CDC14 early anaphase release) network which promotes CDC14 release from the nucleolus during early anaphase and is required for the efficient segregation of telomeric and nucleolar regions. Although BNS1 can partially compensate for a lack of SPO12 function when overexpressed, it does not appear to play any role in controlling meiotic nuclear division. This is Protein BNS1 (BNS1) from Saccharomyces cerevisiae (strain ATCC 204508 / S288c) (Baker's yeast).